A 238-amino-acid chain; its full sequence is Ribonuclease PH (238 aa).

Phosphate-binding positions include R86 and 124-126 (GTR).

It belongs to the RNase PH family. As to quaternary structure, homodimer. Has a tendency to aggregate into multimers. Mg(2+) serves as cofactor.

The catalysed reaction is tRNA(n+1) + phosphate = tRNA(n) + a ribonucleoside 5'-diphosphate. Phosphorolytic exoribonuclease that plays an important role in tRNA 3'-end maturation; has no activity on a tRNA precursor with a 3'-terminal phosphate group. In vitro is freely reversible, adds nucleotides to the ends of RNA molecules by using nucleoside diphosphates as substrates, but this may not be physiologically important. Probably plays a role in initiation of 16S rRNA degradation (leading to ribosome degradation) during starvation. The polypeptide is Ribonuclease PH (Escherichia coli (strain K12 / MC4100 / BW2952)).